Here is a 25-residue protein sequence, read N- to C-terminus: Fibrinolytic enzyme large subunit (25 aa).

The Peptidase S1 domain occupies 1 to 25 (VIGGTNASPGEIPWQLSQQRQSGSW). The segment at 1–25 (VIGGTNASPGEIPWQLSQQRQSGSW) is disordered. Over residues 15-25 (QLSQQRQSGSW) the composition is skewed to polar residues.

The protein belongs to the peptidase S1 family. Heterodimer of a large and a small subunit held together by hydrophobic interactions.

Functionally, cleaves the carboxyl side of basic amino acids, small neutral amino acids, and Met residue. It is also a plasminogen activator. The protein is Fibrinolytic enzyme large subunit of Eisenia fetida (Red wiggler worm).